Consider the following 80-residue polypeptide: MTDFTPDAILDATGLNCPEPVMMLHTHVRNLAAGGLLKVIATDPSTRRDIPKFCNFLGHELLQQQEEAGTYLYWIRKKAD.

Cysteine 17 acts as the Cysteine persulfide intermediate in catalysis.

It belongs to the sulfur carrier protein TusA family.

Its subcellular location is the cytoplasm. In terms of biological role, sulfur carrier protein which probably makes part of a sulfur-relay system. The sequence is that of Sulfur carrier protein TusA from Pseudomonas putida (strain W619).